The chain runs to 207 residues: Protein Nef (207 aa).

A lipid anchor (N-myristoyl glycine; by host) is attached at glycine 2. Serine 6 is subject to Phosphoserine; by host. The acidic; interacts with host PACS1 and PACS2; stabilizes the interaction of NEF/MHC-I with host AP1M1; necessary for MHC-I internalization stretch occupies residues 62 to 66 (EESEE). The segment at 70–79 (PVRPQVPLRP) is SH3-binding; interaction with Src family tyrosine kinases. The short motif at 73-76 (PQVP) is the PxxP; stabilizes the interaction of NEF/MHC-I with host AP1M1; necessary for MHC-I internalization element. Positions 109–125 (EILDLWVYNTQGIFPDW) are mediates dimerization, Nef-PTE1 interaction. The segment at 149–181 (VDPQEVEEATEREDNCLLHPMCQQGMEDPERQV) is binding to ATP6V1H. The Dileucine internalization motif; necessary for CD4 internalization signature appears at 165 to 166 (LL). The Diacidic; necessary for CD4 internalization motif lies at 175–176 (ED).

It belongs to the lentivirus primate group Nef protein family. In terms of assembly, monomer; cytosolic form. Homodimer; membrane bound form. Interacts with Nef associated p21-activated kinase (PAK2); this interaction activates PAK2. Associates with the Nef-MHC-I-AP1 complex; this complex is required for MHC-I internalization. Interacts (via C-terminus) with host PI3-kinase. Interacts with host PACS1; this interaction seems to be weak. Interacts with host PACS2. Interacts with host LCK and MAPK3; these interactions inhibit the kinase activity of the latter. Interacts with host ATP6V1H; this interaction may play a role in CD4 endocytosis. Associates with the CD4-Nef-AP2 complex; this complex is required for CD4 internalization. Interacts with host AP2 subunit alpha and AP2 subunit sigma2. Interacts with TCR-zeta chain; this interaction up-regulates the Fas ligand (FasL) surface expression. Interacts with host HCK, LYN, and SRC; these interactions activate the Src family kinases. Interacts with MAP3K5; this interaction inhibits the Fas and TNFR-mediated death signals. Interacts with beta-COP and PTE1. Interacts with human RACK1; this increases Nef phosphorylation by PKC. Interacts with TP53; this interaction decreases the half-life of TP53, protecting the infected cell against p53-mediated apoptosis. In terms of processing, the virion-associated Nef proteins are cleaved by the viral protease to release the soluble C-terminal core protein. Nef is probably cleaved concomitantly with viral structural proteins on maturation of virus particles. Myristoylated. Post-translationally, phosphorylated on serine residues, probably by host PKCdelta and theta.

Its subcellular location is the host cell membrane. It is found in the virion. The protein localises to the secreted. The protein resides in the host Golgi apparatus membrane. Factor of infectivity and pathogenicity, required for optimal virus replication. Alters numerous pathways of T-lymphocyte function and down-regulates immunity surface molecules in order to evade host defense and increase viral infectivity. Alters the functionality of other immunity cells, like dendritic cells, monocytes/macrophages and NK cells. In terms of biological role, in infected CD4(+) T-lymphocytes, down-regulates the surface MHC-I, mature MHC-II, CD4, CD28, CCR5 and CXCR4 molecules. Mediates internalization and degradation of host CD4 through the interaction of with the cytoplasmic tail of CD4, the recruitment of AP-2 (clathrin adapter protein complex 2), internalization through clathrin coated pits, and subsequent transport to endosomes and lysosomes for degradation. Diverts host MHC-I molecules to the trans-Golgi network-associated endosomal compartments by an endocytic pathway to finally target them for degradation. MHC-I down-regulation may involve AP-1 (clathrin adapter protein complex 1) or possibly Src family kinase-ZAP70/Syk-PI3K cascade recruited by PACS2. In consequence infected cells are masked for immune recognition by cytotoxic T-lymphocytes. Decreasing the number of immune receptors also prevents reinfection by more HIV particles (superinfection). Down-regulates host SERINC3 and SERINC5 thereby excluding these proteins from the viral particles. Virion infectivity is drastically higher when SERINC3 or SERINC5 are excluded from the viral envelope, because these host antiviral proteins impair the membrane fusion event necessary for subsequent virion penetration. Its function is as follows. Bypasses host T-cell signaling by inducing a transcriptional program nearly identical to that of anti-CD3 cell activation. Interaction with TCR-zeta chain up-regulates the Fas ligand (FasL). Increasing surface FasL molecules and decreasing surface MHC-I molecules on infected CD4(+) cells send attacking cytotoxic CD8+ T-lymphocytes into apoptosis. Functionally, plays a role in optimizing the host cell environment for viral replication without causing cell death by apoptosis. Protects the infected cells from apoptosis in order to keep them alive until the next virus generation is ready to strike. Inhibits the Fas and TNFR-mediated death signals by blocking MAP3K5/ASK1. Decreases the half-life of TP53, protecting the infected cell against p53-mediated apoptosis. Inhibits the apoptotic signals regulated by the Bcl-2 family proteins through the formation of a Nef/PI3-kinase/PAK2 complex that leads to activation of PAK2 and induces phosphorylation of host BAD. Extracellular Nef protein targets CD4(+) T-lymphocytes for apoptosis by interacting with CXCR4 surface receptors. This chain is Protein Nef, found in Human immunodeficiency virus type 1 group M subtype D (isolate NDK) (HIV-1).